A 90-amino-acid polypeptide reads, in one-letter code: Acylphosphatase (90 aa).

The region spanning 5–90 (CLKAWVTGRV…DPPPGTFELG (86 aa)) is the Acylphosphatase-like domain. Catalysis depends on residues Arg20 and Asn38.

The protein belongs to the acylphosphatase family.

The catalysed reaction is an acyl phosphate + H2O = a carboxylate + phosphate + H(+). This chain is Acylphosphatase (acyP), found in Chromohalobacter salexigens (strain ATCC BAA-138 / DSM 3043 / CIP 106854 / NCIMB 13768 / 1H11).